Consider the following 681-residue polypeptide: Cell cycle checkpoint protein RAD17 (681 aa).

Residues 17–25 carry the RAD1-binding motif motif; the sequence is DWVDPSFDD. A disordered region spans residues 42–61; that stretch reads VNNSSHRRKNGPSTLESSRF. At T55 the chain carries Phosphothreonine. Residues S71 and S86 each carry the phosphoserine modification. Residue 137–144 participates in ATP binding; the sequence is GPPGCGKT. Disordered regions lie at residues 344 to 377 and 606 to 681; these read SSKGENNLRPRKKGMSLKSDAVLSKSKRRKKPDR and HGMI…SDGT. At S359 the chain carries Phosphoserine. The segment at 432–681 is interaction with MCM7; the sequence is LVEPEEVVEM…IIEDYESDGT (250 aa). The segment covering 631-662 has biased composition (polar residues); that stretch reads EPTQATVPETWSLPLSQNSASELPASQPQPFS. Phosphothreonine; by ATM is present on T633. Phosphoserine; by ATR and ATM is present on residues S646 and S656. Positions 666-681 are enriched in acidic residues; that stretch reads DMEENIIIEDYESDGT.

Belongs to the rad17/RAD24 family. As to quaternary structure, part of a DNA-binding complex containing RFC2, RFC3, RFC4 and RFC5. Interacts with RAD1 and RAD9 within the 9-1-1 (RAD1-RAD9-HUS1) complex. Interacts with RAD9B, POLE, SNU13 and MCM7. DNA damage promotes interaction with ATR or ATM and disrupts interaction with the 9-1-1 (RAD1-RAD9-HUS1) complex. Interacts (when phosphorylated) with NBN; promoting recruitment of the MRN complex to DNA damage sites. Post-translationally, phosphorylation on Ser-646 and Ser-656 is cell cycle-regulated, enhanced by genotoxic stress, and required for activation of checkpoint signaling. Phosphorylation is mediated by ATR upon UV or replication arrest, whereas it may be mediated both by ATR and ATM upon ionizing radiation. Phosphorylation on both sites is required for interaction with RAD1 but dispensable for interaction with RFC3 or RFC4. Phosphorylation at Thr-633 by ATM in response to DNA damage promotes interaction with NBN and recruitment of the MRN complex to DNA damage sites. As to expression, overexpressed in various cancer cell lines and in colon carcinoma (at protein level). Isoform 2 and isoform 3 are the most abundant isoforms in non irradiated cells (at protein level). Ubiquitous at low levels. Highly expressed in testis, where it is expressed within the germinal epithelium of the seminiferous tubuli. Weakly expressed in seminomas (testicular tumors).

It localises to the nucleus. It is found in the chromosome. Its function is as follows. Essential for sustained cell growth, maintenance of chromosomal stability, and ATR-dependent checkpoint activation upon DNA damage. Has a weak ATPase activity required for binding to chromatin. Participates in the recruitment of the 9-1-1 (RAD1-RAD9-HUS1) complex and RHNO1 onto chromatin, and in CHEK1 activation. Involved in homologous recombination by mediating recruitment of the MRN complex to DNA damage sites. May also serve as a sensor of DNA replication progression. The protein is Cell cycle checkpoint protein RAD17 of Homo sapiens (Human).